Here is a 330-residue protein sequence, read N- to C-terminus: Putative heme-binding peroxidase (330 aa).

The active-site Proton acceptor is the H38. H162 provides a ligand contact to heme b. Residue W178 is the Tryptophan radical intermediate of the active site. The segment at 286-330 (GEYKSAPQKSPVPGAPGAGKDGEANPLARQNERAHGQAQHALAKL) is disordered.

Belongs to the peroxidase family. Cytochrome c peroxidase subfamily. Heme b serves as cofactor.

In terms of biological role, destroys radicals which are normally produced within the cells and which are toxic to biological systems. In Mycosarcoma maydis (Corn smut fungus), this protein is Putative heme-binding peroxidase (CCP2).